Consider the following 427-residue polypeptide: 3-phosphoshikimate 1-carboxyvinyltransferase (427 aa).

3 residues coordinate 3-phosphoshikimate: K20, S21, and R25. K20 contacts phosphoenolpyruvate. Phosphoenolpyruvate contacts are provided by G92 and R120. 3-phosphoshikimate is bound by residues S166, Q168, D312, and K339. Q168 contributes to the phosphoenolpyruvate binding site. D312 acts as the Proton acceptor in catalysis. The phosphoenolpyruvate site is built by R343 and R385.

It belongs to the EPSP synthase family. In terms of assembly, monomer.

It localises to the cytoplasm. The catalysed reaction is 3-phosphoshikimate + phosphoenolpyruvate = 5-O-(1-carboxyvinyl)-3-phosphoshikimate + phosphate. It participates in metabolic intermediate biosynthesis; chorismate biosynthesis; chorismate from D-erythrose 4-phosphate and phosphoenolpyruvate: step 6/7. In terms of biological role, catalyzes the transfer of the enolpyruvyl moiety of phosphoenolpyruvate (PEP) to the 5-hydroxyl of shikimate-3-phosphate (S3P) to produce enolpyruvyl shikimate-3-phosphate and inorganic phosphate. The sequence is that of 3-phosphoshikimate 1-carboxyvinyltransferase from Streptococcus pyogenes serotype M4 (strain MGAS10750).